Reading from the N-terminus, the 754-residue chain is ToMV susceptible protein tm-1(GCR26) (754 aa).

Positions 1–201 (MATAQSNSPR…AGMVIGRLES (201 aa)) are N-terminal inhibitory domain NN. Residues 18-20 (DTK), Thr55, Arg92, and 124-127 (GSGG) contribute to the ATP site. The tract at residues 211–431 (KFTVGVTMFG…VDSFLEMSPK (221 aa)) is N-terminal inhibitory domain NC.

It belongs to the UPF0261 family. In terms of assembly, homodimer. As to quaternary structure, (Microbial infection) Binds, via an ATP bridge, to the tobamoviruses avirulent (Avr) replication proteins (large and small subunits, e.g. tobacco mild green mosaic virus (TMGMV) AC P18339 and pepper mild mottle virus (PMMoV) AC P89657) to inhibit their function after the translation of tobamoviruses RNA, but before the viral replication complex formation on the membrane surfaces; this interaction is not possible with resistance-breaking strains replication proteins.

In terms of biological role, inhibitor of viral RNA replication which confers resistance to some tobamoviruses including tobacco mild green mosaic virus (TMGMV) and pepper mild mottle virus (PMMoV), but not to tomato mosaic virus (ToMV strains L, ToMV0 and ToMV1-2) and tobacco mosaic virus (TMV). Prevents tobamoviruses RNA replication by affecting the association of tobamoviruses replication proteins (large and small subunits) with host membrane-associated proteins (e.g. TOM1, TOM2A and ARL8), thus inhibiting the replication complex formation on the membranes and avoiding viral negative-strand RNA synthesis. In Solanum lycopersicum (Tomato), this protein is ToMV susceptible protein tm-1(GCR26).